Reading from the N-terminus, the 958-residue chain is Glycine dehydrogenase (decarboxylating) (958 aa).

At lysine 708 the chain carries N6-(pyridoxal phosphate)lysine.

It belongs to the GcvP family. In terms of assembly, the glycine cleavage system is composed of four proteins: P, T, L and H. Requires pyridoxal 5'-phosphate as cofactor.

It catalyses the reaction N(6)-[(R)-lipoyl]-L-lysyl-[glycine-cleavage complex H protein] + glycine + H(+) = N(6)-[(R)-S(8)-aminomethyldihydrolipoyl]-L-lysyl-[glycine-cleavage complex H protein] + CO2. Its function is as follows. The glycine cleavage system catalyzes the degradation of glycine. The P protein binds the alpha-amino group of glycine through its pyridoxal phosphate cofactor; CO(2) is released and the remaining methylamine moiety is then transferred to the lipoamide cofactor of the H protein. This is Glycine dehydrogenase (decarboxylating) from Photorhabdus laumondii subsp. laumondii (strain DSM 15139 / CIP 105565 / TT01) (Photorhabdus luminescens subsp. laumondii).